The following is a 375-amino-acid chain: Alcohol dehydrogenase 1 (375 aa).

The residue at position 1 (S1) is an N-acetylserine. The Zn(2+) site is built by C46, H67, C97, C100, C103, C111, and C174. Residues 199-204, D223, K228, 293-295, and R370 each bind NAD(+); these read GLGGVG and VGV.

This sequence belongs to the zinc-containing alcohol dehydrogenase family. Class-I subfamily. As to quaternary structure, homodimer. Zn(2+) is required as a cofactor.

It localises to the cytoplasm. It catalyses the reaction a primary alcohol + NAD(+) = an aldehyde + NADH + H(+). The enzyme catalyses a secondary alcohol + NAD(+) = a ketone + NADH + H(+). This chain is Alcohol dehydrogenase 1, found in Naja naja (Indian cobra).